A 313-amino-acid polypeptide reads, in one-letter code: Homoserine O-succinyltransferase (313 aa).

Catalysis depends on C142, which acts as the Acyl-thioester intermediate. The substrate site is built by K163 and S192. H235 serves as the catalytic Proton acceptor. E237 is an active-site residue. R249 is a binding site for substrate.

The protein belongs to the MetA family.

It localises to the cytoplasm. The catalysed reaction is L-homoserine + succinyl-CoA = O-succinyl-L-homoserine + CoA. Its pathway is amino-acid biosynthesis; L-methionine biosynthesis via de novo pathway; O-succinyl-L-homoserine from L-homoserine: step 1/1. Functionally, transfers a succinyl group from succinyl-CoA to L-homoserine, forming succinyl-L-homoserine. In Shewanella baltica (strain OS223), this protein is Homoserine O-succinyltransferase.